A 294-amino-acid chain; its full sequence is Eukaryotic translation initiation factor 3 subunit F (294 aa).

The MPN domain occupies 20-163; sequence VTVTAQALFQ…IDPSKNSGNC (144 aa).

It belongs to the eIF-3 subunit F family. As to quaternary structure, component of the eukaryotic translation initiation factor 3 (eIF-3) complex.

The protein resides in the cytoplasm. Functionally, component of the eukaryotic translation initiation factor 3 (eIF-3) complex, which is involved in protein synthesis of a specialized repertoire of mRNAs and, together with other initiation factors, stimulates binding of mRNA and methionyl-tRNAi to the 40S ribosome. The eIF-3 complex specifically targets and initiates translation of a subset of mRNAs involved in cell proliferation. This Yarrowia lipolytica (strain CLIB 122 / E 150) (Yeast) protein is Eukaryotic translation initiation factor 3 subunit F.